Here is an 89-residue protein sequence, read N- to C-terminus: MAKKSKIAKDRKQRVLVLKYASLRSELKKKADYVGLSQIPAKASPVRLKNRDSIDGRPRGYIRKFGISRIKFRQLAHEGKLPGVKKTSW.

Belongs to the universal ribosomal protein uS14 family. As to quaternary structure, part of the 30S ribosomal subunit. Contacts proteins S3 and S10.

Binds 16S rRNA, required for the assembly of 30S particles and may also be responsible for determining the conformation of the 16S rRNA at the A site. The protein is Small ribosomal subunit protein uS14 of Phytoplasma australiense.